The chain runs to 518 residues: Glutamate--cysteine ligase (518 aa).

Belongs to the glutamate--cysteine ligase type 1 family. Type 1 subfamily.

It catalyses the reaction L-cysteine + L-glutamate + ATP = gamma-L-glutamyl-L-cysteine + ADP + phosphate + H(+). Its pathway is sulfur metabolism; glutathione biosynthesis; glutathione from L-cysteine and L-glutamate: step 1/2. The chain is Glutamate--cysteine ligase from Cronobacter sakazakii (strain ATCC BAA-894) (Enterobacter sakazakii).